Consider the following 124-residue polypeptide: Small ribosomal subunit protein uS13 (124 aa).

Basic residues predominate over residues 103-117 (KCNARTRKGPRKTVA). The segment at 103 to 124 (KCNARTRKGPRKTVANKKIETK) is disordered.

The protein belongs to the universal ribosomal protein uS13 family. Part of the 30S ribosomal subunit. Forms a loose heterodimer with protein S19. Forms two bridges to the 50S subunit in the 70S ribosome.

Functionally, located at the top of the head of the 30S subunit, it contacts several helices of the 16S rRNA. In the 70S ribosome it contacts the 23S rRNA (bridge B1a) and protein L5 of the 50S subunit (bridge B1b), connecting the 2 subunits; these bridges are implicated in subunit movement. Contacts the tRNAs in the A and P-sites. This is Small ribosomal subunit protein uS13 from Malacoplasma penetrans (strain HF-2) (Mycoplasma penetrans).